The following is a 337-amino-acid chain: MQEYKELIKECAKELEGLMPEISQKLVNIAKINSPDRAFLEYLKVVEQVSLMKTERKQKNKALIILWRYGEALEKELYSDVKFFAKPLHKRIFRFVDWKIIGMLFLVFIILPAITSNLWSFRSEHYVLYLNENVDFPRELCNYRTSWLYDFRTSMVCVLKYGYGSINVTLRGNSWEKGVEAQRFISDMEYDFDRVKSPITYIQTPKETLRYKKGVCSDFALLVANILLDNNVSPVYIVHTVVRKEPSGGHAAAGIYVNGTLWILDWGSKPTKFQEYLENIDRIWEIREVRIYRITRDRITLERIYKARLEDDRWRFLYSVIIMLGIFILKRREWWIM.

The chain crosses the membrane as a helical span at residues 100–120 (IIGMLFLVFIILPAITSNLWS).

It belongs to the UPF0252 family.

Its subcellular location is the membrane. The protein is UPF0252 protein PH1321 of Pyrococcus horikoshii (strain ATCC 700860 / DSM 12428 / JCM 9974 / NBRC 100139 / OT-3).